We begin with the raw amino-acid sequence, 454 residues long: Divalent metal cation transporter MntH (454 aa).

Residues 1 to 21 (MSDAEATAPRSSWRFAGRDED) are disordered. The next 11 helical transmembrane spans lie at 45 to 65 (LFAF…PGNW), 78 to 98 (TLLF…ALAA), 122 to 142 (FVLW…EVIG), 153 to 173 (IPLI…LLLM), 182 to 202 (AFVI…IFVA), 220 to 240 (IVTN…TVMP), 275 to 295 (IALM…AVAF), 312 to 332 (LLSP…ALLA), 368 to 388 (GLAI…GTGQ), 389 to 409 (LLVF…VPLV), and 426 to 446 (GVAA…FKLL).

It belongs to the NRAMP family.

It is found in the cell inner membrane. Functionally, h(+)-stimulated, divalent metal cation uptake system. This chain is Divalent metal cation transporter MntH, found in Mesorhizobium japonicum (strain LMG 29417 / CECT 9101 / MAFF 303099) (Mesorhizobium loti (strain MAFF 303099)).